The sequence spans 739 residues: Gamma-tubulin complex component 4 homolog (739 aa).

The protein belongs to the TUBGCP family.

It localises to the cytoplasm. Its subcellular location is the cytoskeleton. It is found in the microtubule organizing center. Gamma-tubulin complex is necessary for microtubule nucleation at the microtubule organizing centers (MTOCs). The polypeptide is Gamma-tubulin complex component 4 homolog (85P) (Medicago truncatula (Barrel medic)).